Consider the following 195-residue polypeptide: MEDIVIATNNQGKINDFKAIFKNQNVIGISELIEDFDVEETGATFEENAKLKSEAAAHALNKRVIADDSGLEVFALNGEPGVYSARYAGLGKNDEDNIEKLLTNLEDVQDRRAQFVCVISMSAPNEKTKTFKGTVSGVITTERHGKNGFGYDPIFFVPELNKTMAEITNDEKGKISHRGNAILLLKEYLEGEQHV.

8-13 (TNNQGK) contributes to the substrate binding site. Residues E39 and D68 each contribute to the Mg(2+) site. D68 functions as the Proton acceptor in the catalytic mechanism. Substrate is bound by residues S69, 149–152 (FGYD), K172, and 177–178 (HR).

This sequence belongs to the HAM1 NTPase family. Homodimer. The cofactor is Mg(2+).

The enzyme catalyses XTP + H2O = XMP + diphosphate + H(+). The catalysed reaction is dITP + H2O = dIMP + diphosphate + H(+). It catalyses the reaction ITP + H2O = IMP + diphosphate + H(+). In terms of biological role, pyrophosphatase that catalyzes the hydrolysis of nucleoside triphosphates to their monophosphate derivatives, with a high preference for the non-canonical purine nucleotides XTP (xanthosine triphosphate), dITP (deoxyinosine triphosphate) and ITP. Seems to function as a house-cleaning enzyme that removes non-canonical purine nucleotides from the nucleotide pool, thus preventing their incorporation into DNA/RNA and avoiding chromosomal lesions. This chain is dITP/XTP pyrophosphatase, found in Staphylococcus epidermidis (strain ATCC 35984 / DSM 28319 / BCRC 17069 / CCUG 31568 / BM 3577 / RP62A).